A 173-amino-acid polypeptide reads, in one-letter code: Putative metal-dependent hydrolase BC_2708 (173 aa).

The Zn(2+) site is built by His-65, His-156, and His-160.

Belongs to the metal hydrolase YfiT family. Homodimer. It depends on Zn(2+) as a cofactor.

The protein localises to the cytoplasm. In terms of biological role, possible metal-dependent hydrolase. The sequence is that of Putative metal-dependent hydrolase BC_2708 from Bacillus cereus (strain ATCC 14579 / DSM 31 / CCUG 7414 / JCM 2152 / NBRC 15305 / NCIMB 9373 / NCTC 2599 / NRRL B-3711).